A 72-amino-acid chain; its full sequence is Translational regulator CsrA (72 aa).

The protein belongs to the CsrA/RsmA family. In terms of assembly, homodimer; the beta-strands of each monomer intercalate to form a hydrophobic core, while the alpha-helices form wings that extend away from the core.

It is found in the cytoplasm. Functionally, a translational regulator that binds mRNA to regulate translation initiation and/or mRNA stability. Usually binds in the 5'-UTR at or near the Shine-Dalgarno sequence preventing ribosome-binding, thus repressing translation. Its main target seems to be the major flagellin gene, while its function is anatagonized by FliW. In Clostridium novyi (strain NT), this protein is Translational regulator CsrA.